The primary structure comprises 260 residues: Ubiquinone/menaquinone biosynthesis C-methyltransferase UbiE (260 aa).

S-adenosyl-L-methionine contacts are provided by residues Thr-83, Asp-104, and 132–133 (NA).

This sequence belongs to the class I-like SAM-binding methyltransferase superfamily. MenG/UbiE family.

It carries out the reaction a 2-demethylmenaquinol + S-adenosyl-L-methionine = a menaquinol + S-adenosyl-L-homocysteine + H(+). The catalysed reaction is a 2-methoxy-6-(all-trans-polyprenyl)benzene-1,4-diol + S-adenosyl-L-methionine = a 5-methoxy-2-methyl-3-(all-trans-polyprenyl)benzene-1,4-diol + S-adenosyl-L-homocysteine + H(+). Its pathway is quinol/quinone metabolism; menaquinone biosynthesis; menaquinol from 1,4-dihydroxy-2-naphthoate: step 2/2. It functions in the pathway cofactor biosynthesis; ubiquinone biosynthesis. Its function is as follows. Methyltransferase required for the conversion of demethylmenaquinol (DMKH2) to menaquinol (MKH2) and the conversion of 2-polyprenyl-6-methoxy-1,4-benzoquinol (DDMQH2) to 2-polyprenyl-3-methyl-6-methoxy-1,4-benzoquinol (DMQH2). In Bartonella henselae (strain ATCC 49882 / DSM 28221 / CCUG 30454 / Houston 1) (Rochalimaea henselae), this protein is Ubiquinone/menaquinone biosynthesis C-methyltransferase UbiE.